The chain runs to 360 residues: Phospho-N-acetylmuramoyl-pentapeptide-transferase (360 aa).

Helical transmembrane passes span 25 to 45, 73 to 93, 97 to 117, 142 to 162, 168 to 188, 199 to 219, 236 to 256, 263 to 283, 288 to 308, and 338 to 358; these read RGIL…PWMI, TMGG…WADL, YVWV…VDDY, VGAA…TLII, ASIP…VGSS, GLAI…CYLS, AGEL…FLWF, VFMG…IAVI, IVLF…VIQV, and VIVR…ATLK.

It belongs to the glycosyltransferase 4 family. MraY subfamily. Mg(2+) is required as a cofactor.

It is found in the cell inner membrane. It carries out the reaction UDP-N-acetyl-alpha-D-muramoyl-L-alanyl-gamma-D-glutamyl-meso-2,6-diaminopimeloyl-D-alanyl-D-alanine + di-trans,octa-cis-undecaprenyl phosphate = di-trans,octa-cis-undecaprenyl diphospho-N-acetyl-alpha-D-muramoyl-L-alanyl-D-glutamyl-meso-2,6-diaminopimeloyl-D-alanyl-D-alanine + UMP. It participates in cell wall biogenesis; peptidoglycan biosynthesis. Catalyzes the initial step of the lipid cycle reactions in the biosynthesis of the cell wall peptidoglycan: transfers peptidoglycan precursor phospho-MurNAc-pentapeptide from UDP-MurNAc-pentapeptide onto the lipid carrier undecaprenyl phosphate, yielding undecaprenyl-pyrophosphoryl-MurNAc-pentapeptide, known as lipid I. The protein is Phospho-N-acetylmuramoyl-pentapeptide-transferase of Pseudomonas fluorescens (strain SBW25).